A 347-amino-acid chain; its full sequence is Protein RecA (347 aa).

64 to 71 serves as a coordination point for ATP; it reads GPESSGKT.

Belongs to the RecA family.

It is found in the cytoplasm. Its function is as follows. Can catalyze the hydrolysis of ATP in the presence of single-stranded DNA, the ATP-dependent uptake of single-stranded DNA by duplex DNA, and the ATP-dependent hybridization of homologous single-stranded DNAs. It interacts with LexA causing its activation and leading to its autocatalytic cleavage. This chain is Protein RecA, found in Bartonella quintana (strain Toulouse) (Rochalimaea quintana).